We begin with the raw amino-acid sequence, 344 residues long: Laforin, isoform 9 (344 aa).

Disordered stretches follow at residues 1-44, 58-134, 158-188, and 320-344; these read MHPK…PGPG, GGGA…PRGH, PAPG…RRAS, and SLKK…QCAT. The segment covering 77-88 has biased composition (low complexity); that stretch reads AARAGALGAARC. Residues 101–131 show a composition bias toward gly residues; it reads RGPGPAGAGPVARGGGAGGRGGGAGRGGAGP. Residues 179–188 show a composition bias toward basic residues; the sequence is RPRRPRRRAS.

Interacts with isoform 1 and isoform 2.

The protein localises to the nucleus. The chain is Laforin, isoform 9 from Homo sapiens (Human).